A 375-amino-acid chain; its full sequence is Protein arginine N-methyltransferase 6 (375 aa).

The interval 1 to 38 is disordered; the sequence is MSQPKKRKLESGGGGEGGEGTEEEDGAEREAALERPRR. Position 21 is a phosphothreonine (Thr21). Basic and acidic residues predominate over residues 28 to 38; sequence EREAALERPRR. An asymmetric dimethylarginine; by autocatalysis mark is found at Arg29, Arg35, and Arg37. The SAM-dependent MTase PRMT-type domain occupies 44–374; sequence DQLYYECYSD…EEKTKDFAME (331 aa). The S-adenosyl-L-methionine site is built by His57, Arg66, Gly90, Glu112, and Glu141. Active-site residues include Glu155 and Glu164.

The protein belongs to the class I-like SAM-binding methyltransferase superfamily. Protein arginine N-methyltransferase family. PRMT6 subfamily. Interacts with EPB41L3 and NCOA1. In terms of assembly, (Microbial infection) Interacts with (and methylates) HIV-1 Tat, Rev and Nucleocapsid protein p7 (NC). As to quaternary structure, (Microbial infection) Interacts with human cytomegalovirus protein UL69. Post-translationally, automethylation enhances its stability and antiretroviral activity. In terms of tissue distribution, highly expressed in kidney and testis.

It is found in the nucleus. The enzyme catalyses L-arginyl-[protein] + 2 S-adenosyl-L-methionine = N(omega),N(omega)-dimethyl-L-arginyl-[protein] + 2 S-adenosyl-L-homocysteine + 2 H(+). In terms of biological role, arginine methyltransferase that can catalyze the formation of both omega-N monomethylarginine (MMA) and asymmetrical dimethylarginine (aDMA), with a strong preference for the formation of aDMA. Preferentially methylates arginyl residues present in a glycine and arginine-rich domain and displays preference for monomethylated substrates. Specifically mediates the asymmetric dimethylation of histone H3 'Arg-2' to form H3R2me2a. H3R2me2a represents a specific tag for epigenetic transcriptional repression and is mutually exclusive with methylation on histone H3 'Lys-4' (H3K4me2 and H3K4me3). Acts as a transcriptional repressor of various genes such as HOXA2, THBS1 and TP53. Repression of TP53 blocks cellular senescence. Also methylates histone H2A and H4 'Arg-3' (H2AR3me and H4R3me, respectively). Acts as a regulator of DNA base excision during DNA repair by mediating the methylation of DNA polymerase beta (POLB), leading to the stimulation of its polymerase activity by enhancing DNA binding and processivity. Methylates HMGA1. Regulates alternative splicing events. Acts as a transcriptional coactivator of a number of steroid hormone receptors including ESR1, ESR2, PGR and NR3C1. Promotes fasting-induced transcriptional activation of the gluconeogenic program through methylation of the CRTC2 transcription coactivator. May play a role in innate immunity against HIV-1 in case of infection by methylating and impairing the function of various HIV-1 proteins such as Tat, Rev and Nucleocapsid protein p7 (NC). Methylates GPS2, protecting GPS2 from ubiquitination and degradation. Methylates SIRT7, inhibiting SIRT7 histone deacetylase activity and promoting mitochondria biogenesis. The sequence is that of Protein arginine N-methyltransferase 6 (PRMT6) from Homo sapiens (Human).